Reading from the N-terminus, the 275-residue chain is Large ribosomal subunit protein uL2 (275 aa).

2 disordered regions span residues 24-48 (LTTD…NAGD) and 224-264 (VMNP…NKRT). Residues 31 to 42 (KPLTKTKQRTGG) show a composition bias toward basic residues.

The protein belongs to the universal ribosomal protein uL2 family. In terms of assembly, part of the 50S ribosomal subunit. Forms a bridge to the 30S subunit in the 70S ribosome.

Its function is as follows. One of the primary rRNA binding proteins. Required for association of the 30S and 50S subunits to form the 70S ribosome, for tRNA binding and peptide bond formation. It has been suggested to have peptidyltransferase activity; this is somewhat controversial. Makes several contacts with the 16S rRNA in the 70S ribosome. In Koribacter versatilis (strain Ellin345), this protein is Large ribosomal subunit protein uL2.